Reading from the N-terminus, the 240-residue chain is Phosphoribosylaminoimidazole-succinocarboxamide synthase (240 aa).

The protein belongs to the SAICAR synthetase family.

The catalysed reaction is 5-amino-1-(5-phospho-D-ribosyl)imidazole-4-carboxylate + L-aspartate + ATP = (2S)-2-[5-amino-1-(5-phospho-beta-D-ribosyl)imidazole-4-carboxamido]succinate + ADP + phosphate + 2 H(+). The protein operates within purine metabolism; IMP biosynthesis via de novo pathway; 5-amino-1-(5-phospho-D-ribosyl)imidazole-4-carboxamide from 5-amino-1-(5-phospho-D-ribosyl)imidazole-4-carboxylate: step 1/2. The protein is Phosphoribosylaminoimidazole-succinocarboxamide synthase of Limosilactobacillus fermentum (strain NBRC 3956 / LMG 18251) (Lactobacillus fermentum).